The primary structure comprises 366 residues: Zinc transporter ZIP13 (366 aa).

The Lumenal segment spans residues 1 to 5 (MTKQK). The chain crosses the membrane as a helical span at residues 6–26 (LLLNGTFSLILIVACEAQQLP). The Cytoplasmic portion of the chain corresponds to 27–57 (RSHAASSSGPLCEKEAESWGNLLSSERLDAW). A helical membrane pass occupies residues 58 to 78 (ICSLIGSFMVGLSGIFPLLVI). Topologically, residues 79 to 97 (PFETGAALRSEAGSRRLKQ) are lumenal. A helical transmembrane segment spans residues 98-118 (LLSFAIGGLLGNVFLHLLPEA). Topologically, residues 119–137 (WAYTCSAAAGEGQSFQQQK) are cytoplasmic. Residues 138–158 (LLGLWVIIGFLTFLALEKIFL) traverse the membrane as a helical segment. Residues 159–225 (EKEEEECPGV…NRIKISGYLN (67 aa)) are Lumenal-facing. A disordered region spans residues 183–205 (SGYPPSKVAGKSQRAEKNSTQCN). Residues 226 to 246 (LLANTIDNFTHGLAVAASFLV) traverse the membrane as a helical segment. The Cytoplasmic portion of the chain corresponds to 247 to 282 (SRKVGFLTTMAILLHEIPHEVGDFAILLRAGFDRWS). The XEXPHE-motif motif lies at 261–266 (HEIPHE). Residues 283 to 303 (AAKMQLSTALGGIVGACFAIC) traverse the membrane as a helical segment. Topologically, residues 304–313 (AQSPKGAGET) are lumenal. A helical transmembrane segment spans residues 314 to 334 (VAWILPFTSGGFLYIALVNVV). The Cytoplasmic segment spans residues 335 to 343 (PDLLEEKNP). The chain crosses the membrane as a helical span at residues 344–364 (WNSLQQILLLCTGITVMVLLA). At 365 to 366 (HN) the chain is on the lumenal side.

This sequence belongs to the ZIP transporter (TC 2.A.5) family. As to quaternary structure, homodimer.

The protein resides in the golgi apparatus membrane. The protein localises to the cytoplasmic vesicle membrane. Its subcellular location is the endoplasmic reticulum membrane. It carries out the reaction Zn(2+)(in) = Zn(2+)(out). In terms of biological role, functions as a zinc transporter transporting Zn(2+) from the Golgi apparatus to the cytosol and thus influences the zinc level at least in areas of the cytosol. The polypeptide is Zinc transporter ZIP13 (Gallus gallus (Chicken)).